The primary structure comprises 154 residues: CASP-like protein 5C2 (154 aa).

The Cytoplasmic segment spans residues 1–17 (MEHVPGSFGTSASFALR). Residues 18–38 (FGQTIFSAASLIFMCFDFDFY) form a helical membrane-spanning segment. The Extracellular portion of the chain corresponds to 39–41 (DFT). The helical transmembrane segment at 42-62 (TFCYLAMVMAIVTPWSILLAL) threads the bilayer. At 63–81 (TDTYSVLVKLLPQELRVLS) the chain is on the cytoplasmic side. The chain crosses the membrane as a helical span at residues 82–102 (IVFAGDFVLSFLSLGGACAVA). The Extracellular segment spans residues 103–128 (SATELLASADGKICDGSLCIQYQVSA). Residues 129 to 149 (ALAFLCWFLLLASALFNFWSL) traverse the membrane as a helical segment. The Cytoplasmic portion of the chain corresponds to 150-154 (PSLYY).

This sequence belongs to the Casparian strip membrane proteins (CASP) family. In terms of assembly, homodimer and heterodimers.

Its subcellular location is the cell membrane. The polypeptide is CASP-like protein 5C2 (Arabidopsis thaliana (Mouse-ear cress)).